The chain runs to 438 residues: Leupeptin-inactivating enzyme 1 (438 aa).

The N-terminal stretch at 1-37 (MSLSVSRRLAAVTAFAVAGLFASAVPAALAAPSAVAA) is a signal peptide. Positions 125 and 137 each coordinate Zn(2+). Glu-171 (proton acceptor) is an active-site residue. Glu-172, Asp-200, and His-287 together coordinate Zn(2+). Cys-285 and Cys-290 are disulfide-bonded. Positions 321 to 438 (VPPGQSFENT…GYINSWKITF (118 aa)) constitute a P/Homo B domain.

It belongs to the peptidase M28 family. M28A subfamily. Monomer. Requires Zn(2+) as cofactor.

It is found in the secreted. Activity is inhibited by metalloprotease inhibitors and activated by Mg(2+) and Ca(2+). Its function is as follows. A leucine-specific metalloprotease that plays a role in controlling the amount of leupeptin during colony development. Degrades leupeptin into three components, acetyl-leucine, leucine and argininal. Has a strict preference for leucine at the P1 site. This is Leupeptin-inactivating enzyme 1 (lieA) from Streptomyces exfoliatus (Streptomyces hydrogenans).